The sequence spans 141 residues: Early nodulin-like protein 19 (141 aa).

The N-terminal stretch at 1-26 is a signal peptide; that stretch reads MGRSMVLISAVVLAFLVAAPIPEVTA. Positions 27-127 constitute a Phytocyanin domain; that stretch reads KKYLVGDKKF…GMKLDVLVET (101 aa). Asn42 and Asn88 each carry an N-linked (GlcNAc...) asparagine glycan. An intrachain disulfide couples Cys80 to Cys115.

Belongs to the early nodulin-like (ENODL) family.

In terms of biological role, may act as a carbohydrate transporter. This chain is Early nodulin-like protein 19, found in Arabidopsis thaliana (Mouse-ear cress).